Consider the following 284-residue polypeptide: Protoheme IX farnesyltransferase (284 aa).

9 helical membrane-spanning segments follow: residues 2–19 (SLVVFTALVGLLVAPVTV), 23–45 (IALTGILFIALGAGASGALNMWS), 69–89 (GEALGIGLALSGIAVVMLGLA), 92–112 (LFAAGLLAFTIFFYAVVYSMW), 121–141 (IVIGGAAGAFPPMIGWAVATG), 148–168 (LFMFALIFMWTPPHFWSLALF), 194–214 (VLVYSLLLAPLAVAGAFTGTG), 217–237 (LYLATALALNGWLLVGAVRTW), and 263–283 (LFLHFGAILAEAALKPYGLGG).

The protein belongs to the UbiA prenyltransferase family. Protoheme IX farnesyltransferase subfamily. As to quaternary structure, interacts with CtaA.

The protein localises to the cell inner membrane. It carries out the reaction heme b + (2E,6E)-farnesyl diphosphate + H2O = Fe(II)-heme o + diphosphate. It functions in the pathway porphyrin-containing compound metabolism; heme O biosynthesis; heme O from protoheme: step 1/1. In terms of biological role, converts heme B (protoheme IX) to heme O by substitution of the vinyl group on carbon 2 of heme B porphyrin ring with a hydroxyethyl farnesyl side group. This is Protoheme IX farnesyltransferase from Cereibacter sphaeroides (Rhodobacter sphaeroides).